Consider the following 47-residue polypeptide: Putative beta-neurotoxin (47 aa).

Positions 1 to 47 constitute an LCN-type CS-alpha/beta domain; sequence KEGYMGSDGCKMSCVINDQFCDTECQAKLKGSTGYCYFXGLACYXXG. Intrachain disulfides connect Cys-14/Cys-36 and Cys-21/Cys-43.

In terms of tissue distribution, expressed by the venom gland.

The protein localises to the secreted. In terms of biological role, causes transient paralysis of the rear legs of and spasms in insects (A.domestica). The polypeptide is Putative beta-neurotoxin (Rhopalurus junceus (Caribbean blue scorpion)).